The following is a 265-amino-acid chain: Hydroxyethylthiazole kinase (265 aa).

Substrate is bound at residue methionine 44. ATP is bound by residues lysine 120 and threonine 166. Substrate is bound at residue glycine 193.

Belongs to the Thz kinase family. Mg(2+) serves as cofactor.

It carries out the reaction 5-(2-hydroxyethyl)-4-methylthiazole + ATP = 4-methyl-5-(2-phosphooxyethyl)-thiazole + ADP + H(+). It participates in cofactor biosynthesis; thiamine diphosphate biosynthesis; 4-methyl-5-(2-phosphoethyl)-thiazole from 5-(2-hydroxyethyl)-4-methylthiazole: step 1/1. In terms of biological role, catalyzes the phosphorylation of the hydroxyl group of 4-methyl-5-beta-hydroxyethylthiazole (THZ). The sequence is that of Hydroxyethylthiazole kinase from Clostridium novyi (strain NT).